The sequence spans 191 residues: Large ribosomal subunit protein eL6 (191 aa).

The protein belongs to the eukaryotic ribosomal protein eL6 family.

This Tetrahymena thermophila (strain SB210) protein is Large ribosomal subunit protein eL6 (RPL6).